We begin with the raw amino-acid sequence, 140 residues long: Oleosin Cor a 13 (140 aa).

2 helical membrane passes run 31–51 and 75–95; these read GSLL…LTLA and GFLA…WIYR.

Belongs to the oleosin family. In terms of tissue distribution, expressed in seeds.

It localises to the lipid droplet. The protein resides in the membrane. Its function is as follows. May have a structural role to stabilize the lipid body during desiccation of the seed by preventing coalescence of the oil. Probably interacts with both lipid and phospholipid moieties of lipid bodies. May also provide recognition signals for specific lipase anchorage in lipolysis during seedling growth. This chain is Oleosin Cor a 13, found in Corylus avellana (European hazel).